A 243-amino-acid polypeptide reads, in one-letter code: Segregation and condensation protein A (243 aa).

Belongs to the ScpA family. Component of a cohesin-like complex composed of ScpA, ScpB and the Smc homodimer, in which ScpA and ScpB bind to the head domain of Smc. The presence of the three proteins is required for the association of the complex with DNA.

The protein localises to the cytoplasm. In terms of biological role, participates in chromosomal partition during cell division. May act via the formation of a condensin-like complex containing Smc and ScpB that pull DNA away from mid-cell into both cell halves. This Thermoanaerobacter pseudethanolicus (strain ATCC 33223 / 39E) (Clostridium thermohydrosulfuricum) protein is Segregation and condensation protein A.